Reading from the N-terminus, the 446-residue chain is Adenylosuccinate synthetase (446 aa).

Residues 21–27 (GDEGKGK) and 49–51 (GHT) each bind GTP. The Proton acceptor role is filled by aspartate 22. Mg(2+) is bound by residues aspartate 22 and glycine 49. IMP is bound by residues 22–25 (DEGK), 47–50 (NAGH), threonine 141, arginine 155, glutamine 236, threonine 251, and arginine 319. The active-site Proton donor is the histidine 50. 315–321 (VTTGRSR) contacts substrate. GTP contacts are provided by residues arginine 321, 347-349 (KLD), and 429-431 (STS).

The protein belongs to the adenylosuccinate synthetase family. In terms of assembly, homodimer. It depends on Mg(2+) as a cofactor.

It is found in the cytoplasm. The enzyme catalyses IMP + L-aspartate + GTP = N(6)-(1,2-dicarboxyethyl)-AMP + GDP + phosphate + 2 H(+). Its pathway is purine metabolism; AMP biosynthesis via de novo pathway; AMP from IMP: step 1/2. In terms of biological role, plays an important role in the de novo pathway of purine nucleotide biosynthesis. Catalyzes the first committed step in the biosynthesis of AMP from IMP. The protein is Adenylosuccinate synthetase of Polaromonas naphthalenivorans (strain CJ2).